Reading from the N-terminus, the 389-residue chain is Odorant receptor 85c (389 aa).

Over 1-33 the chain is Cytoplasmic; sequence MKFMKYAVFFYTSVGIEPYTIDSRSKKASLWSH. Residues 34 to 54 traverse the membrane as a helical segment; that stretch reads LLFWANVINLSVIVFGEILYL. The Extracellular segment spans residues 55–66; that stretch reads GVAYSDGKFIDA. The helical transmembrane segment at 67–87 threads the bilayer; that stretch reads VTVLSYIGFVIVGMSKMFFIW. The Cytoplasmic portion of the chain corresponds to 88–130; sequence WKKTDLSDLVKELEHIYPNGKAEEEMYRLDRYLRSCSRISITY. A helical membrane pass occupies residues 131-151; it reads ALLYSVLIWTFNLFSIMQFLV. The Extracellular portion of the chain corresponds to 152–199; that stretch reads YEKLLKIRVVGQTLPYLMYFPWNWHENWTYYVLLFCQNFAGHTSASGQ. Asn178 carries N-linked (GlcNAc...) asparagine glycosylation. A helical transmembrane segment spans residues 200 to 220; sequence ISTDLLLCAVATQVVMHFDYL. Over 221–259 the chain is Cytoplasmic; that stretch reads ARVVEKQVLDRDWSENSRFLAKTVQYHQRILRLMDVLND. A helical membrane pass occupies residues 260–280; that stretch reads IFGIPLLLNFMVSTFVICFVG. Residues 281–290 lie on the Extracellular side of the membrane; the sequence is FQMTVGVPPD. A helical membrane pass occupies residues 291–311; that stretch reads IMIKLFLFLFSSLSQVYLICH. Residues 312 to 359 are Cytoplasmic-facing; sequence YGQLIADASSSLSISAYKQNWQNADIRYRRALVFFIARPQRTTYLKAT. Residues 360 to 380 traverse the membrane as a helical segment; it reads IFMNITRATMTDLLQVSYKFF. Over 381 to 389 the chain is Extracellular; the sequence is ALLRTMYIK.

Belongs to the insect chemoreceptor superfamily. Heteromeric odorant receptor channel (TC 1.A.69) family. Or49a subfamily. As to quaternary structure, interacts with Orco. Complexes exist early in the endomembrane system in olfactory sensory neurons (OSNs), coupling these complexes to the conserved ciliary trafficking pathway.

It is found in the cell membrane. In terms of biological role, odorant receptor which mediates acceptance or avoidance behavior, depending on its substrates. The odorant receptor repertoire encodes a large collection of odor stimuli that vary widely in identity, intensity, and duration. May form a complex with Orco to form odorant-sensing units, providing sensitive and prolonged odorant signaling and calcium permeability. This is Odorant receptor 85c (Or85c) from Drosophila melanogaster (Fruit fly).